A 271-amino-acid chain; its full sequence is Calretinin (271 aa).

6 consecutive EF-hand domains span residues 16 to 51, 63 to 98, 107 to 142, 151 to 186, 195 to 230, and 235 to 270; these read LTAS…LEKA, NFGE…EENF, GSSA…LLKK, KLQE…QENF, LTSE…LYEK, and MNIQ…SEPP. Ca(2+) is bound by residues D29, D31, N33, Y35, E40, D76, N78, D80, K82, E87, D120, D122, S124, Y126, E131, D164, N166, D168, K170, E175, D208, D210, S212, Y214, and E219. The residue at position 214 (Y214) is a Phosphotyrosine.

Belongs to the calbindin family. In terms of tissue distribution, widely expressed in central nervous system. Expressed in type I unipolar brush cells of the cerebellum (at protein level).

It localises to the synapse. It is found in the cell projection. The protein localises to the dendrite. Calcium-binding protein involved in calcium homeostasis and signal transduction. It plays a critical role in buffering intracellular calcium levels and modulating calcium-dependent signaling pathways. Predominantly expressed in specific neuronal populations, influences synaptic plasticity and neuronal excitability, contributing to learning and memory. During embryonic development, it facilitates neuronal differentiation and maturation. The polypeptide is Calretinin (Calb2) (Mus musculus (Mouse)).